Consider the following 208-residue polypeptide: Ras-related protein Rab6 (208 aa).

Position 19–27 (19–27 (GEQSVGKTS)) interacts with GTP. Positions 41–49 (YQATIGIDF) match the Effector region motif. GTP is bound by residues 67 to 71 (DTAGQ), 125 to 128 (NKTD), and 155 to 157 (SAK). The tract at residues 176-208 (MDSTENKPSEDMQEVVLKDSPNETKDPEGGCAC) is disordered. Residues 179 to 208 (TENKPSEDMQEVVLKDSPNETKDPEGGCAC) show a composition bias toward basic and acidic residues.

This sequence belongs to the small GTPase superfamily. Rab family. Interacts with Rich and Act5C. Interacts with BicD (via C-terminal domain). Interacts (in GTP-bound) with GCC1/CG10703 and cbs. Interacts with Gorab (via C-terminus); binds to a Gorab homodimer, this interaction seems to be required for trans-Golgi localization of Gorab. As to expression, expressed in larval eye, wing and leg imaginal disks and in salivary gland. Expressed in the larval optic lobe, showing an enrichment in the neuropil. In the adult brain, expressed in photoreceptors and mushroom body.

It is found in the golgi apparatus membrane. It localises to the synapse. The protein resides in the perikaryon. Its function is as follows. Protein transport. Regulator of membrane traffic from the Golgi apparatus towards the endoplasmic reticulum (ER). Mediates membrane trafficking during egg chamber growth and organization, possibly upstream of exocyst component Sec5. Also during oogenesis, plays a role, together with BicD but independently of Sec5, in the polarization of the oocyte microtubule cytoskeleton, in the localization of oskar mRNA and in the anterodorsal secretion of grk. Required for anterograde opsin transport through the ER-Golgi complex. Plays a role, together with Rich, in regulating CadN transport in photoreceptor cells which is required for the formation of normal synaptic connections between axons from the inner photoreceptor cells in the eye and postsynaptic cells in the brain medulla layer M6. Necessary for proper development of bristle shafts of macrochaete and microchaete on the head, thorax and scutellum. Modulates Notch signaling. As a key regulator of vesicular traffic, plays a critical role in the regulation of actin organization and is required for normal rates of phagocytic uptake during phagocytosis involved in defense against viral and fungal infection. The protein is Ras-related protein Rab6 of Drosophila melanogaster (Fruit fly).